Consider the following 546-residue polypeptide: MGPDNRRILLATVLSVGILILWQVIFPTKKVPPKPAPPPAAEVAKPAAPASPAPGAAAPAVPAPPPDAPEETVKLAGKGFEATLTTYGGALKSLRLEGDKFRKQEKDREVQIDLVHVTDGQPYPLSLSASPELGGAADVAADPGARAPMRIVAKDASSVTFEGRVGNLAARKTFRVTGKPYELALDVELSGGAGNGTVGVLYPAFMPPDTKSGGIFSGPPLDFVRPVCRAGTTTERFDLAKEGAPEKLEGQVSWAGVDQHYFVAAVLPAEPIGTCTFVRGPVKGAGLAALAVPVEGGARKLSLTVYAGPKDLDTLRGYGRGFESAIDYGAVAKFFALFARGLLYVMRWLEAIVRNWGVAIILLTVLVRLVLFPLTYKSMQSMNEMRKLQPEIEKLKAKFGDDREKMNLAVMQLYQKHKVNPLGGCLPMLLQMPVWFALYAALQTSVELYREPFLWMKDLTAHDPYFILPIAMGISSFVMQKLSPQPADNAQAKMMLYFFPGFFTVIMLFVPGGLTLYIFVNNLLSIVQQQLMMKHQQAAPAPAAGK.

The chain crosses the membrane as a helical span at residues 8 to 28; that stretch reads ILLATVLSVGILILWQVIFPT. The disordered stretch occupies residues 31 to 70; sequence VPPKPAPPPAAEVAKPAAPASPAPGAAAPAVPAPPPDAPE. Residues 41 to 60 show a composition bias toward low complexity; the sequence is AEVAKPAAPASPAPGAAAPA. Helical transmembrane passes span 326–346, 356–376, 422–442, 459–479, and 498–518; these read IDYG…LYVM, WGVA…PLTY, LGGC…YAAL, LTAH…SFVM, and FFPG…TLYI.

The protein belongs to the OXA1/ALB3/YidC family. Type 1 subfamily. As to quaternary structure, interacts with the Sec translocase complex via SecD. Specifically interacts with transmembrane segments of nascent integral membrane proteins during membrane integration.

Its subcellular location is the cell inner membrane. In terms of biological role, required for the insertion and/or proper folding and/or complex formation of integral membrane proteins into the membrane. Involved in integration of membrane proteins that insert both dependently and independently of the Sec translocase complex, as well as at least some lipoproteins. Aids folding of multispanning membrane proteins. This chain is Membrane protein insertase YidC, found in Anaeromyxobacter sp. (strain K).